A 338-amino-acid chain; its full sequence is Adenylosuccinate synthetase (338 aa).

Residues Gly-12 to Lys-18 and Gly-42 to Thr-44 contribute to the GTP site. Residue Asp-13 is the Proton acceptor of the active site. 2 residues coordinate Mg(2+): Asp-13 and Gly-42. IMP contacts are provided by residues Asp-13–Lys-16, Asn-40–His-43, Thr-127, Arg-141, Gln-179, Thr-194, and Arg-256. The active-site Proton donor is His-43. Thr-252–Arg-258 lines the substrate pocket. Residues Arg-258, Cys-284–Asp-286, and Ser-324–Gly-326 contribute to the GTP site.

The protein belongs to the adenylosuccinate synthetase family. In terms of assembly, homodimer. It depends on Mg(2+) as a cofactor.

The protein resides in the cytoplasm. It catalyses the reaction IMP + L-aspartate + GTP = N(6)-(1,2-dicarboxyethyl)-AMP + GDP + phosphate + 2 H(+). The protein operates within purine metabolism; AMP biosynthesis via de novo pathway; AMP from IMP: step 1/2. Plays an important role in the de novo pathway of purine nucleotide biosynthesis. Catalyzes the first committed step in the biosynthesis of AMP from IMP. This Methanococcus maripaludis (strain C7 / ATCC BAA-1331) protein is Adenylosuccinate synthetase.